A 210-amino-acid chain; its full sequence is Putative fructokinase-8 (210 aa).

It belongs to the carbohydrate kinase PfkB family.

It catalyses the reaction D-fructose + ATP = D-fructose 6-phosphate + ADP + H(+). The protein operates within glycan biosynthesis; starch biosynthesis. Its function is as follows. May play an important role in maintaining the flux of carbon towards starch formation. In Arabidopsis thaliana (Mouse-ear cress), this protein is Putative fructokinase-8.